A 388-amino-acid polypeptide reads, in one-letter code: F-box protein ETP2 (388 aa).

In terms of domain architecture, F-box spans 2-48; it reads KTIQEQLPNDLVEEILCRVPATSLRRLRSTCKAWNRLFKGDRILASK.

In terms of assembly, interacts with EIN2 (via C-terminus).

Negative regulator of EIN2 protein stability. This is F-box protein ETP2 from Arabidopsis thaliana (Mouse-ear cress).